The following is a 419-amino-acid chain: UDP-N-acetylglucosamine 1-carboxyvinyltransferase (419 aa).

Position 22–23 (22–23) interacts with phosphoenolpyruvate; the sequence is KN. R92 is a UDP-N-acetyl-alpha-D-glucosamine binding site. C116 acts as the Proton donor in catalysis. Position 116 is a 2-(S-cysteinyl)pyruvic acid O-phosphothioketal (C116). Residues 121–125, D306, and I328 contribute to the UDP-N-acetyl-alpha-D-glucosamine site; that span reads RPVDQ.

Belongs to the EPSP synthase family. MurA subfamily.

It is found in the cytoplasm. The catalysed reaction is phosphoenolpyruvate + UDP-N-acetyl-alpha-D-glucosamine = UDP-N-acetyl-3-O-(1-carboxyvinyl)-alpha-D-glucosamine + phosphate. It participates in cell wall biogenesis; peptidoglycan biosynthesis. Cell wall formation. Adds enolpyruvyl to UDP-N-acetylglucosamine. Target for the antibiotic phosphomycin. The polypeptide is UDP-N-acetylglucosamine 1-carboxyvinyltransferase (Acinetobacter guillouiae (Acinetobacter genomosp. 11)).